The sequence spans 2912 residues: Fibrillin-2 (2912 aa).

Positions 1–28 (MGRRRRLCLQLYFLWLGCVVLWAQGTAG) are cleaved as a signal peptide. Residues 27–52 (AGQPQPPPPKPPRPQPPPQQVRSATA) are disordered. The propeptide occupies 29–77 (QPQPPPPKPPRPQPPPQQVRSATAGSEGGFLAPEYREEGAAVASRVRRR). Residues 30-45 (PQPPPPKPPRPQPPPQ) show a composition bias toward pro residues. EGF-like domains follow at residues 111–142 (IVPI…STCG), 145–176 (SIQQ…TYCG), and 176–208 (GQPV…PQCE). Disulfide bonds link C115–C124, C119–C130, C132–C141, C149–C159, C153–C164, C166–C175, C180–C190, C184–C196, and C198–C207. Positions 149–359 (CSVRCMNGGT…VTSTDGSRCI (211 aa)) are interaction with MFAP4. A TB 1 domain is found at 214–266 (GPCFTQVNNQMCQGQLTGIVCTKTLCCATIGRAWGHPCEMCPAQPQPCRRGFI). Residues 276–317 (DVDECQAIPGICQGGNCINTVGSFECRCPAGHKQSETTQKCE) enclose the EGF-like 4; calcium-binding domain. Disulfide bonds link C280–C292, C287–C301, C303–C316, C322–C334, C329–C343, and C345–C358. An O-linked (Glc) serine glycan is attached at S298. In terms of domain architecture, EGF-like 5; calcium-binding spans 318 to 359 (DIDECSIIPGICETGECSNTVGSYFCVCPRGYVTSTDGSRCI). S340 is a glycosylation site (O-linked (Glc) serine). The TB 2 domain occupies 364–417 (GMCFSGLVNGRCAQELPGRMTKMQCCCEPGRCWGIGTIPEACPVRGSEEYRRLC). N-linked (GlcNAc...) asparagine glycosylation is present at N492. In terms of domain architecture, EGF-like 6 spans 494-534 (TIDICKHHANLCLNGRCIPTVSSYRCECNMGYKQDANGDCI). 15 disulfide bridges follow: C498-C510, C505-C519, C521-C533, C539-C549, C544-C558, C560-C573, C579-C591, C586-C600, C602-C615, C621-C632, C627-C641, C643-C656, C662-C673, C668-C682, and C684-C697. The O-linked (Glc) serine glycan is linked to S516. The 40-residue stretch at 535–574 (DVDECTSNPCTNGDCVNTPGSYYCKCHAGFQRTPTKQACI) folds into the EGF-like 7; calcium-binding domain. The O-linked (Glc) serine glycan is linked to S555. One can recognise an EGF-like 8; calcium-binding domain in the interval 575–616 (DIDECIQNGVLCKNGRCVNTDGSFQCICNAGFELTTDGKNCV). S597 is a glycosylation site (O-linked (Glc) serine). The EGF-like 9; calcium-binding domain occupies 617–657 (DHDECTTTNMCLNGMCINEDGSFKCICKPGFVLAPNGRYCT). O-linked (Glc) serine glycosylation is present at S638. Positions 658-698 (DVDECQTPGICMNGHCINSEGSFRCDCPPGLAVGMDGRVCV) constitute an EGF-like 10; calcium-binding domain. Residue S679 is glycosylated (O-linked (Glc) serine). Residues 704–756 (STCYGGIKKGVCVRPFPGAVTKSECCCANPDYGFGEPCQPCPAKNSAEFHGLC) form the TB 3 domain. In terms of domain architecture, EGF-like 11; calcium-binding spans 768 to 809 (DINECALDPDICANGICENLRGSYRCNCNSGYEPDASGRNCI). Intrachain disulfides connect C772-C784, C779-C793, C795-C808, C814-C826, C821-C835, C837-C850, C856-C866, C861-C875, and C877-C890. The EGF-like 12; calcium-binding domain maps to 810–851 (DIDECLVNRLLCDNGLCRNTPGSYSCTCPPGYVFRTETETCE). S832 is a glycosylation site (O-linked (Glc) serine). Positions 852-891 (DINECESNPCVNGACRNNLGSFNCECSPGSKLSSTGLICI) constitute an EGF-like 13; calcium-binding domain. O-linked (Glc) serine glycosylation occurs at S872. One can recognise a TB 4 domain in the interval 896-947 (GTCWLNIQDSRCEVNINGATLKSECCATLGAAWGSPCERCELDTACPRGLAR). In terms of domain architecture, EGF-like 14; calcium-binding spans 955–996 (DVNECEVFPGVCPNGRCVNSKGSFHCECPEGLTLDGTGRVCL). 3 cysteine pairs are disulfide-bonded: C959–C971, C966–C980, and C982–C995. The O-linked (Glc) serine glycan is linked to S977. A TB 5 domain is found at 1001 to 1052 (EQCYLKWDEDECIHPVPGKFRMDACCCAVGAAWGTECEECPKPGTKEYETLC). Positions 1073–1114 (DINECKAFPGMCTYGKCRNTIGSFKCRCNSGFALDMEERNCT) constitute an EGF-like 15; calcium-binding domain. Disulfide bonds link C1077-C1089, C1084-C1098, C1100-C1113, C1119-C1131, C1126-C1140, C1142-C1156, C1162-C1174, C1169-C1183, C1185-C1198, C1204-C1216, C1211-C1225, C1227-C1240, C1246-C1257, C1253-C1266, C1268-C1281, C1287-C1299, C1294-C1308, C1310-C1323, C1329-C1341, C1336-C1350, C1352-C1365, C1371-C1384, C1378-C1393, C1395-C1406, C1412-C1425, C1419-C1434, C1436-C1447, C1453-C1465, C1460-C1474, C1476-C1489, C1495-C1506, C1501-C1515, C1517-C1530, C1536-C1547, C1542-C1556, and C1558-C1571. S1095 is a glycosylation site (O-linked (Glc) serine). The N-linked (GlcNAc...) asparagine glycan is linked to N1112. The 43-residue stretch at 1115–1157 (DIDECRISPDLCGSGICVNTPGSFECECFEGYESGFMMMKNCM) folds into the EGF-like 16; calcium-binding domain. The region spanning 1158–1199 (DIDECERNPLLCRGGTCVNTEGSFQCDCPLGHELSPSREDCV) is the EGF-like 17; calcium-binding domain. Residue S1180 is glycosylated (O-linked (Glc) serine). Positions 1200–1241 (DINECSLSDNLCRNGKCVNMIGTYQCSCNPGYQATPDRQGCT) constitute an EGF-like 18; calcium-binding domain. O-linked (Glc) threonine glycosylation is present at T1222. The EGF-like 19; calcium-binding domain maps to 1242–1282 (DIDECMIMNGGCDTQCTNSEGSYECSCSEGYALMPDGRSCA). O-linked (Glc) serine glycosylation is present at S1263. The EGF-like 20; calcium-binding domain maps to 1283-1324 (DIDECENNPDICDGGQCTNIPGEYRCLCYDGFMASMDMKTCI). Positions 1325-1366 (DVNECDLNSNICMFGECENTKGSFICHCQLGYSVKKGTTGCT) constitute an EGF-like 21; calcium-binding domain. O-linked (Glc) serine glycosylation is present at S1347. Residues 1367 to 1407 (DVDECEIGAHNCDMHASCLNIPGSFKCSCREGWIGNGIKCI) enclose the EGF-like 22; calcium-binding domain. S1390 carries O-linked (Glc) serine glycosylation. An EGF-like 23; calcium-binding domain is found at 1408 to 1448 (DLDECSNGTHQCSINAQCVNTPGSYRCACSEGFTGDGFTCS). An N-linked (GlcNAc...) asparagine glycan is attached at N1414. One can recognise an EGF-like 24; calcium-binding domain in the interval 1449–1490 (DVDECAENINLCENGQCLNVPGAYRCECEMGFTPASDSRSCQ). The region spanning 1491–1531 (DIDECSFQNICVFGTCNNLPGMFHCICDDGYELDRTGGNCT) is the EGF-like 25; calcium-binding domain. Residue N1529 is glycosylated (N-linked (GlcNAc...) asparagine). Residues 1532–1572 (DIDECADPINCVNGLCVNTPGRYECNCPPDFQLNPTGVGCV) enclose the EGF-like 26; calcium-binding domain. The TB 6 domain occupies 1577 to 1633 (GNCYLKFGPRGDGSLSCNTEIGVGVSRSSCCCSLGKAWGNPCETCPPVNSTEYYTLC). N1625 carries N-linked (GlcNAc...) asparagine glycosylation. The EGF-like 27; calcium-binding domain maps to 1650–1691 (DIDECQELPGLCQGGNCINTFGSFQCECPQGYYLSEDTRICE). Intrachain disulfides connect C1654–C1666, C1661–C1675, C1677–C1690, C1696–C1708, C1703–C1717, and C1719–C1732. The O-linked (Glc) serine glycan is linked to S1672. The EGF-like 28; calcium-binding domain maps to 1692-1733 (DIDECFAHPGVCGPGTCYNTLGNYTCICPPEYMQVNGGHNCM). The N-linked (GlcNAc...) asparagine glycan is linked to N1714. The interaction with MFAP4 stretch occupies residues 1735-2171 (MRKSFCYRSY…VPSLHDTRED (437 aa)). The TB 7 domain maps to 1738-1791 (SFCYRSYNGTTCENELPFNVTKRMCCCTYNVGKAWNKPCEPCPTPGTADFKTIC). N1745 and N1756 each carry an N-linked (GlcNAc...) asparagine glycan. Residues 1808 to 1849 (DIDECKEIPGICANGVCINQIGSFRCECPTGFSYNDLLLVCE) form the EGF-like 29; calcium-binding domain. Disulfide bonds link C1812/C1824, C1819/C1833, C1835/C1848, C1854/C1867, C1861/C1876, C1878/C1890, C1896/C1908, C1903/C1917, C1919/C1932, C1938/C1948, C1943/C1957, C1959/C1971, C1977/C1990, C1985/C1999, C2001/C2014, C2020/C2032, C2027/C2041, C2043/C2054, C2060/C2072, C2067/C2081, and C2083/C2096. An EGF-like 30; calcium-binding domain is found at 1850 to 1891 (DIDECSNGDNLCQRNADCINSPGSYRCECAAGFKLSPNGACV). The O-linked (Glc) serine glycan is linked to S1873. In terms of domain architecture, EGF-like 31; calcium-binding spans 1892–1933 (DRNECLEIPNVCSHGLCVDLQGSYQCICHNGFKASQDQTMCM). The EGF-like 32; calcium-binding domain maps to 1934-1972 (DVDECERHPCGNGTCKNTVGSYNCLCYPGFELTHNNDCL). A glycan (N-linked (GlcNAc...) asparagine) is linked at N1945. O-linked (Glc) serine glycosylation is present at S1954. An EGF-like 33; calcium-binding domain is found at 1973-2015 (DIDECSSFFGQVCRNGRCFNEIGSFKCLCNEGYELTPDGKNCI). Residue S1996 is glycosylated (O-linked (Glc) serine). The 40-residue stretch at 2016 to 2055 (DTNECVALPGSCSPGTCQNLEGSFRCICPPGYEVKSENCI) folds into the EGF-like 34; calcium-binding domain. An EGF-like 35; calcium-binding domain is found at 2056–2097 (DINECDEDPNICLFGSCTNTPGGFQCLCPPGFVLSDNGRRCF). Residues 2102-2155 (SFCFTNFENGKCSVPKAFNTTKAKCCCSKMPGEGWGDPCELCPKDDEVAFQDLC) form the TB 8 domain. N2120 is a glycosylation site (N-linked (GlcNAc...) asparagine). An EGF-like 36; calcium-binding domain is found at 2171 to 2212 (DVNECLESPGICSNGQCINTDGSFRCECPMGYNLDYTGVRCV). Intrachain disulfides connect C2175/C2187, C2182/C2196, C2198/C2211, C2217/C2228, C2223/C2237, C2239/C2251, C2257/C2268, C2264/C2277, C2279/C2292, C2298/C2312, C2305/C2321, C2323/C2336, C2342/C2354, C2349/C2363, and C2365/C2378. O-linked (Glc) serine glycosylation is present at S2193. The EGF-like 37; calcium-binding domain maps to 2213 to 2252 (DTDECSIGNPCGNGTCTNVIGSFECNCNEGFEPGPMMNCE). Residue N2225 is glycosylated (N-linked (GlcNAc...) asparagine). An EGF-like 38; calcium-binding domain is found at 2253–2293 (DINECAQNPLLCAFRCMNTFGSYECTCPIGYALREDQKMCK). S2274 is a glycosylation site (O-linked (Glc) serine). In terms of domain architecture, EGF-like 39; calcium-binding spans 2294–2337 (DLDECAEGLHDCESRGMMCKNLIGTFMCICPPGMARRPDGEGCV). An EGF-like 40; calcium-binding domain is found at 2338–2379 (DENECRTKPGICENGRCVNIIGSYRCECNEGFQSSSSGTECL). O-linked (Glc) serine glycosylation is present at S2360. Positions 2384–2437 (GLCFAEVLQTICQMASSSRNLVTKSECCCDGGRGWGHQCELCPLPGTAQYKKIC) constitute a TB 9 domain. Residues 2449-2490 (DIDECKVMPNLCTNGQCINTMGSFRCFCKVGYTTDISGTSCI) enclose the EGF-like 41; calcium-binding domain. 21 disulfide bridges follow: C2453-C2465, C2460-C2474, C2476-C2489, C2495-C2506, C2502-C2515, C2517-C2530, C2536-C2547, C2543-C2556, C2558-C2569, C2575-C2588, C2582-C2597, C2599-C2612, C2618-C2628, C2624-C2637, C2639-C2652, C2658-C2669, C2664-C2678, C2680-C2693, C2699-C2710, C2706-C2719, and C2721-C2733. O-linked (Glc) serine glycosylation occurs at S2471. The EGF-like 42; calcium-binding domain occupies 2491–2531 (DLDECSQSPKPCNYICKNTEGSYQCSCPRGYVLQEDGKTCK). The O-linked (Glc) serine glycan is linked to S2512. The 39-residue stretch at 2532–2570 (DLDECQTKQHNCQFLCVNTLGGFTCKCPPGFTQHHTACI) folds into the EGF-like 43; calcium-binding domain. The region spanning 2571–2613 (DNNECGSQPSLCGAKGICQNTPGSFSCECQRGFSLDATGLNCE) is the EGF-like 44; calcium-binding domain. O-linked (Glc) serine glycosylation occurs at S2594. The 40-residue stretch at 2614–2653 (DVDECDGNHRCQHGCQNILGGYRCGCPQGYIQHYQWNQCV) folds into the EGF-like 45; calcium-binding domain. In terms of domain architecture, EGF-like 46; calcium-binding spans 2654–2694 (DENECSNPNACGSASCYNTLGSYKCACPSGFSFDQFSSACH). O-linked (Glc) serine glycosylation occurs at S2675. Positions 2695 to 2734 (DVNECSSSKNPCNYGCSNTEGGYLCGCPPGYYRVGQGHCV) constitute an EGF-like 47; calcium-binding domain. The N-linked (GlcNAc...) asparagine glycan is linked to N2808.

It belongs to the fibrillin family. In terms of assembly, interacts with BMP2, BMP4, BMP7, BMP10 and GDF5. Interacts with MFAP2 and MFAP5. Interacts with ADAMTSL5. Interacts with MFAP4. N-glycosylated. Post-translationally, O-glycosylated on serine residues by POGLUT2 and POGLUT3. In terms of tissue distribution, almost exclusively expressed in placenta. Expressed at much lower level in other tissues. Expressed in fetal eye (18 weeks)in the retinal pigment epithelium (RPE), the choroid, Bruch's membrane and in the sclera. Not expressed in the neural retina. As to expression, present at high level in cytotrophoblasts as compared with syncytiotrophoblasts at 8-9 weeks of pregnancy (at protein level). Levels in the serum increase during pregnancy (at protein level).

The protein resides in the secreted. Its subcellular location is the extracellular space. It localises to the extracellular matrix. Fibrillins are structural components of 10-12 nm extracellular calcium-binding microfibrils, which occur either in association with elastin or in elastin-free bundles. Fibrillin-2-containing microfibrils regulate the early process of elastic fiber assembly. Regulates osteoblast maturation by controlling TGF-beta bioavailability and calibrating TGF-beta and BMP levels, respectively. Functionally, hormone secreted by trophoblasts that promotes trophoblast invasiveness. Has glucogenic activity: is able to increase plasma glucose levels. This chain is Fibrillin-2, found in Homo sapiens (Human).